The primary structure comprises 142 residues: uncharacterized protein (142 aa).

This is an uncharacterized protein from Gallid herpesvirus 2 (strain GA) (GaHV-2).